Here is a 588-residue protein sequence, read N- to C-terminus: Actin-histidine N-methyltransferase (588 aa).

Residues 1-25 are disordered; it reads MGKKSRVKTQKSGTGATASVSPKET. The segment covering 10–25 has biased composition (polar residues); it reads QKSGTGATASVSPKET. S-adenosyl-L-methionine-binding positions include R75, 104-106, R254, 275-279, and 325-327; these read EGF, DMCNH, and SGF. An SET domain is found at 94-314; sequence EGFEMVNFKE…AGEQIYIFYG (221 aa). The segment at 546–588 is disordered; it reads VNGENSIPNGTRSGKENFNQEGSERATEGTKESSSDSTAGARE. The segment covering 548–566 has biased composition (polar residues); the sequence is GENSIPNGTRSGKENFNQE. Over residues 567–579 the composition is skewed to basic and acidic residues; that stretch reads GSERATEGTKESS.

Belongs to the class V-like SAM-binding methyltransferase superfamily. SETD3 actin-histidine methyltransferase family. As to quaternary structure, interacts with MYOD1. Phosphorylated by GSK3B, which is required for recognition by the SCF(FBXW7) complex and subsequent degradation. Post-translationally, ubiquitinated by the SCF(FBXW7) complex following phosphorylation by GSK3B, leading to its degradation by the proteasome.

Its subcellular location is the cytoplasm. The protein resides in the nucleus. It carries out the reaction L-histidyl-[protein] + S-adenosyl-L-methionine = N(tele)-methyl-L-histidyl-[protein] + S-adenosyl-L-homocysteine + H(+). In terms of biological role, protein-histidine N-methyltransferase that specifically mediates 3-methylhistidine (tele-methylhistidine) methylation of actin at 'His-73'. Histidine methylation of actin is required for smooth muscle contraction of the laboring uterus during delivery. Does not have protein-lysine N-methyltransferase activity and probably only catalyzes histidine methylation of actin. The sequence is that of Actin-histidine N-methyltransferase from Canis lupus familiaris (Dog).